A 318-amino-acid chain; its full sequence is Petal death protein (318 aa).

A propeptide spans 1–3 (MAP) (removed in mature form). The tract at residues 1 to 24 (MAPPNGTTNGETEVATQGSYTAVS) is disordered. Aspartate 107, aspartate 109, and lysine 142 together coordinate Mg(2+).

This sequence belongs to the isocitrate lyase/PEP mutase superfamily. As to quaternary structure, homodimer and homotetramer formed by a dimer of homodimer. Mg(2+) serves as cofactor. The cofactor is Mn(2+). Fe(2+) is required as a cofactor. It depends on Co(2+) as a cofactor. In terms of tissue distribution, accumulates in senescing flower petals.

The catalysed reaction is oxaloacetate + H2O = oxalate + acetate + H(+). In terms of biological role, catalyzes cleavage of the C(2)-C(3) bond in oxaloacetate and in (2R)-alkyl malate derivatives to form oxalate and acetate, and alkyl carboxylates and R-ketocarboxylates, respectively. This is Petal death protein from Dianthus caryophyllus (Carnation).